The sequence spans 237 residues: Phosphoribosylaminoimidazole-succinocarboxamide synthase (237 aa).

The protein belongs to the SAICAR synthetase family.

The enzyme catalyses 5-amino-1-(5-phospho-D-ribosyl)imidazole-4-carboxylate + L-aspartate + ATP = (2S)-2-[5-amino-1-(5-phospho-beta-D-ribosyl)imidazole-4-carboxamido]succinate + ADP + phosphate + 2 H(+). Its pathway is purine metabolism; IMP biosynthesis via de novo pathway; 5-amino-1-(5-phospho-D-ribosyl)imidazole-4-carboxamide from 5-amino-1-(5-phospho-D-ribosyl)imidazole-4-carboxylate: step 1/2. In Salmonella arizonae (strain ATCC BAA-731 / CDC346-86 / RSK2980), this protein is Phosphoribosylaminoimidazole-succinocarboxamide synthase.